The sequence spans 302 residues: D-alanine--D-alanine ligase (302 aa).

One can recognise an ATP-grasp domain in the interval Lys99–Asp298. Residue Leu128–Thr183 participates in ATP binding. Mg(2+)-binding residues include Asp252, Glu265, and Asn267.

This sequence belongs to the D-alanine--D-alanine ligase family. It depends on Mg(2+) as a cofactor. Mn(2+) is required as a cofactor.

The protein localises to the cytoplasm. It catalyses the reaction 2 D-alanine + ATP = D-alanyl-D-alanine + ADP + phosphate + H(+). It participates in cell wall biogenesis; peptidoglycan biosynthesis. Functionally, cell wall formation. This chain is D-alanine--D-alanine ligase, found in Gloeobacter violaceus (strain ATCC 29082 / PCC 7421).